We begin with the raw amino-acid sequence, 464 residues long: Asparagine--tRNA ligase (464 aa).

This sequence belongs to the class-II aminoacyl-tRNA synthetase family. In terms of assembly, homodimer.

Its subcellular location is the cytoplasm. The enzyme catalyses tRNA(Asn) + L-asparagine + ATP = L-asparaginyl-tRNA(Asn) + AMP + diphosphate + H(+). The sequence is that of Asparagine--tRNA ligase from Acetivibrio thermocellus (strain ATCC 27405 / DSM 1237 / JCM 9322 / NBRC 103400 / NCIMB 10682 / NRRL B-4536 / VPI 7372) (Clostridium thermocellum).